The primary structure comprises 265 residues: Mlc titration factor A (265 aa).

Zn(2+) is bound by residues His-111, His-148, His-152, and Glu-211.

The protein belongs to the MtfA family. In terms of assembly, interacts with Mlc. The cofactor is Zn(2+).

It localises to the cytoplasm. Involved in the modulation of the activity of the glucose-phosphotransferase system (glucose-PTS). Interacts with the transcriptional repressor Mlc, preventing its interaction with DNA and leading to the modulation of expression of genes regulated by Mlc, including ptsG, which encodes the PTS system glucose-specific EIICB component. In terms of biological role, shows zinc-dependent metallopeptidase activity. The polypeptide is Mlc titration factor A (Escherichia fergusonii (strain ATCC 35469 / DSM 13698 / CCUG 18766 / IAM 14443 / JCM 21226 / LMG 7866 / NBRC 102419 / NCTC 12128 / CDC 0568-73)).